A 589-amino-acid polypeptide reads, in one-letter code: MATISNETPLWRLQQTLNHILPQSVRKNEKHLAVVHGPTQPALWEMTLGELLEFQCLRYRDLEAVVVPWTAARWTYGQLENESSHLARGLLAKGIQRGDRIGVMAGNCEEYVSLFFAAARVGAILVVINNTYTDAELKYALSHTACKLLFIVPRIGRHDLKNALEDLHSPDISKRLPNLNETVMIQGSFKSFGTYKDVILAGNVVPLSAVQRRQDTLSPFDVCNLQFTSGSTGNPKASMLTHHNLINNSRFIGDRMDFTEYDILCCPPPLFHCFGLVLGLLACITHGAKVVYPAETFDPEAVLRAISDERCTALHGVPTMFEAILALSRPDSFDCSQLRTGIIAGAPVPRPLMKRLWNELNMTEFTSSYGLTEASPTCFNAFTSDSIATRLTTVGKVLPHASAKIINPETGETVKIGERGELCMSGYQIHKGYWGNLEKTAEALIEDEDGTIWLRTGDEAVFNSDGYCTITGRFKDIIIRGGENIYPLEIEERLTAHPAISRAAVVGLPNKHYGEIVGAFLVLEPGHTCPPDDEIKNWTRQTLGRHKAPKHVFVFGLDPRLPLDMPQTGSGKIQKQVLRDLGKRLVGEE.

The short motif at 12-20 (RLQQTLNHI) is the PTS2-type peroxisomal targeting signal element. ATP is bound by residues 228–236 (TSGSTGNPK), 367–372 (SSYGLT), Asp458, and Arg473. Residue Thr372 participates in substrate binding. CoA is bound by residues 481–483 (GGE), Lys547, and 555–557 (FGL). Position 572 (Lys572) interacts with ATP.

Belongs to the ATP-dependent AMP-binding enzyme family.

It is found in the peroxisome. The protein operates within siderophore biosynthesis. Functionally, acyl-CoA ligase; part of the gene cluster that mediates the biosynthesis of hydroxamate-containing siderophores that play a critical role in virulence via intracellular iron acquisition during macrophage infection. This chain is Acyl-CoA ligase SID4, found in Ajellomyces capsulatus (Darling's disease fungus).